The primary structure comprises 77 residues: Probable Fe(2+)-trafficking protein (77 aa).

The protein belongs to the Fe(2+)-trafficking protein family. As to quaternary structure, monomer.

Functionally, could be a mediator in iron transactions between iron acquisition and iron-requiring processes, such as synthesis and/or repair of Fe-S clusters in biosynthetic enzymes. This chain is Probable Fe(2+)-trafficking protein, found in Buchnera aphidicola subsp. Acyrthosiphon pisum (strain APS) (Acyrthosiphon pisum symbiotic bacterium).